Reading from the N-terminus, the 192-residue chain is Fe/S biogenesis protein NfuA (192 aa).

2 residues coordinate [4Fe-4S] cluster: C150 and C153.

Belongs to the NfuA family. As to quaternary structure, homodimer. The cofactor is [4Fe-4S] cluster.

In terms of biological role, involved in iron-sulfur cluster biogenesis. Binds a 4Fe-4S cluster, can transfer this cluster to apoproteins, and thereby intervenes in the maturation of Fe/S proteins. Could also act as a scaffold/chaperone for damaged Fe/S proteins. The protein is Fe/S biogenesis protein NfuA of Ruthia magnifica subsp. Calyptogena magnifica.